The primary structure comprises 210 residues: MTKGCFITVEGGEGAGKTSALDAIEEMLRENGLSVVRTREPGGIPIAEQIRSIILDVDHTRMDPRTEALLYAAARRQHLVEKVLPALEAGHVVLCDRFIDSSLAYQGYARGIGFEDILAINEFAIEGRYPDLTLLFRVDPDVGLSRIHRDQSREQNRLDQEALTFHQKVKEGYERIVETYPERVVEIDANQSFDQVVADAVRMIKQRLSL.

11–18 (GGEGAGKT) is an ATP binding site.

This sequence belongs to the thymidylate kinase family.

It catalyses the reaction dTMP + ATP = dTDP + ADP. Phosphorylation of dTMP to form dTDP in both de novo and salvage pathways of dTTP synthesis. The sequence is that of Thymidylate kinase (tmk) from Halalkalibacterium halodurans (strain ATCC BAA-125 / DSM 18197 / FERM 7344 / JCM 9153 / C-125) (Bacillus halodurans).